Here is a 993-residue protein sequence, read N- to C-terminus: Muscular LMNA-interacting protein (993 aa).

Residues 1–51 (MLSEQGLLSDCGNNYFQMTSCILSGSIQTTPQVSAGGSEAKPLIFTFVPTV) are interaction with LMNA. Positions 71 to 90 (PEESSDKSPETVNRSKSNDY) are disordered. Over residues 80–90 (ETVNRSKSNDY) the composition is skewed to polar residues. At S146 the chain carries Phosphoserine. Disordered regions lie at residues 152-171 (AASR…AAVR), 186-225 (VRPK…TSEQ), 231-250 (PAFS…PVNL), 300-322 (PHST…KPGL), 334-358 (SHVL…SLKS), 443-481 (SPAS…QGEL), 500-582 (TPLS…IHTY), 677-711 (SALH…TPSL), and 811-864 (LSMH…SQLT). A required for interaction with ISL1 region spans residues 161-837 (PPGGIGTAAV…GSDTVKTPTT (677 aa)). Residues 212–225 (KHGQLTSSPTTSEQ) are compositionally biased toward polar residues. The segment covering 300-315 (PHSTQLSGSNLPSSTA) has biased composition (polar residues). Low complexity predominate over residues 343–358 (PRTSSSPPSSSASLKS). Residues 500–532 (TPLSQAPSLSPTKQASSSLASMNVERTPSPTLK) show a composition bias toward polar residues. Positions 533–563 (SNTMLSLLQTSTSSSVGLPPVPPSSSLSSLK) are enriched in low complexity. A compositionally biased stretch (basic and acidic residues) spans 564–574 (SKQDGDLRGPE). The segment covering 695–711 (SESTTPNHRSPVSTPSL) has biased composition (polar residues). Residues 811–822 (LSMHSSDSPSRS) show a composition bias toward low complexity. At S818 the chain carries Phosphoserine. The segment covering 849 to 864 (ANLSSPSSTVSESQLT) has biased composition (polar residues).

Directly interacts with LMNA. Interacts with ISL1 (via N-terminal domain); the interaction represses ISL1 transactivator activity. Interactions of ISL1 with MLIP1 and GCN5/KAT2A may be mutually exclusive. As to expression, predominantly expressed in the heart and skeletal muscle. Also detected in liver. Expressed in skeletal muscle.

The protein resides in the nucleus. The protein localises to the nucleus envelope. It is found in the PML body. It localises to the cytoplasm. Its subcellular location is the cytosol. The protein resides in the cell membrane. The protein localises to the sarcolemma. In terms of biological role, required for myoblast differentiation into myotubes, possibly acting as a transcriptional regulator of the myogenic program. Required for cardiac adaptation to stress through integrated regulation of the AKT/mTOR pathways and FOXO1. Regulates cardiac homeostasis and plays a role in the protection against cardiac hypertrophy. Binds chromatin. May act as a transcriptional cofactor for ISL1, repressing its transcriptional activity. May also repress MYOCD transcriptional activity. The sequence is that of Muscular LMNA-interacting protein from Homo sapiens (Human).